The primary structure comprises 148 residues: UPF0756 membrane protein YeaL (148 aa).

4 helical membrane passes run 14-34, 51-71, 86-106, and 121-141; these read ALGF…LIIV, LSIG…SGTL, LVAI…VTLM, and VLGV…AGLV.

It belongs to the UPF0756 family.

It is found in the cell membrane. The sequence is that of UPF0756 membrane protein YeaL from Shigella flexneri.